A 104-amino-acid polypeptide reads, in one-letter code: Large ribosomal subunit protein bL21 (104 aa).

This sequence belongs to the bacterial ribosomal protein bL21 family. In terms of assembly, part of the 50S ribosomal subunit. Contacts protein L20.

In terms of biological role, this protein binds to 23S rRNA in the presence of protein L20. The polypeptide is Large ribosomal subunit protein bL21 (Thermotoga petrophila (strain ATCC BAA-488 / DSM 13995 / JCM 10881 / RKU-1)).